A 688-amino-acid polypeptide reads, in one-letter code: MARQYPLEKFRNFGIMAHIDAGKTTTTERILFYTGRNHKIGETHDGASTMDWMAQEQERGITITSAATTCFWKGYELNIIDTPGHVDFTVEVERSLRVLDGAVTVLDAKSGVEPQTETVWRQADKYGVPRMIYVNKMDATGADYYNCINTVRERLQANAVAIQIPIGQEDQFQGMVDLLTNQAIIFKDDLGKDIEVSDVPADLADKAEEYRAAMIEAIAETDEELMMKYLEGEELTLEELKVALRKATINNEIIPVICGSSYKNKGVQQMIDGVVDYLPSPLDIPAVKGTNLDGEEEVREASDDAPMSALAFKIATDPFVGRLAFTRVYSGVLESGSYVLNSTKGKKERIGRLVKMHANSREEVESLEAAELGAVIGLKNTTTGDTLCTEAAPIILEKMEFPEPVISIAIEPKTKAGQEKMGIALSKLAEEDPTFKTWTDQETGQTIIAGMGELHLDIIVDRLQREFKVECNVGAPQVAYKETIKKAVEAEAKFARQSGGRGQYGHCKIEMIPTEGEYEFENAIVGGAIPREYIPAVDNGIREAAESGIIAGYPVINFKIRLFDGSYHDVDSSEMAFKIAGSMAFKNAMAKADAVLLEPIMKVEITVPEEYMGDVIGDVNSRRGRMEGMDSRNGAQIIRAFIPLSEMFGYATALRSRTQGRGTYAMEFDHYDDVPKSIQEEVAGKKNK.

Positions 8 to 282 (EKFRNFGIMA…GVVDYLPSPL (275 aa)) constitute a tr-type G domain. GTP contacts are provided by residues 17–24 (AHIDAGKT), 81–85 (DTPGH), and 135–138 (NKMD).

The protein belongs to the TRAFAC class translation factor GTPase superfamily. Classic translation factor GTPase family. EF-G/EF-2 subfamily.

The protein localises to the cytoplasm. Functionally, catalyzes the GTP-dependent ribosomal translocation step during translation elongation. During this step, the ribosome changes from the pre-translocational (PRE) to the post-translocational (POST) state as the newly formed A-site-bound peptidyl-tRNA and P-site-bound deacylated tRNA move to the P and E sites, respectively. Catalyzes the coordinated movement of the two tRNA molecules, the mRNA and conformational changes in the ribosome. The sequence is that of Elongation factor G from Clostridium perfringens (strain ATCC 13124 / DSM 756 / JCM 1290 / NCIMB 6125 / NCTC 8237 / Type A).